Reading from the N-terminus, the 102-residue chain is Integration host factor subunit beta (102 aa).

This sequence belongs to the bacterial histone-like protein family. As to quaternary structure, heterodimer of an alpha and a beta chain.

This protein is one of the two subunits of integration host factor, a specific DNA-binding protein that functions in genetic recombination as well as in transcriptional and translational control. The polypeptide is Integration host factor subunit beta (ihfB) (Rhizobium radiobacter (Agrobacterium tumefaciens)).